The following is a 257-amino-acid chain: MNIIPAIDILGGRCVRLYQGDYKQTQIFNDNPVDVAKRWADEGATKLHLVDLDAAKVGQPVNQKTIEAIIKAVDIPIQVGGGLRNYSTVASLLALGVQQAILGTVAIEQPELVSDFCQKFPGQIIVGIDARDGKVATKGWLETSQVLATDLALQMAKLKVAAIIYTDIHRDGTLKGPNIEALRELATAVSIPVIASGGISSINDLLNLLALETIGVKGAIVGRALYTGGISLKEANQAVGQGRWQDVPPNLGSSTFV.

The active-site Proton acceptor is Asp8. The active-site Proton donor is the Asp129.

It belongs to the HisA/HisF family.

The protein localises to the cytoplasm. The enzyme catalyses 1-(5-phospho-beta-D-ribosyl)-5-[(5-phospho-beta-D-ribosylamino)methylideneamino]imidazole-4-carboxamide = 5-[(5-phospho-1-deoxy-D-ribulos-1-ylimino)methylamino]-1-(5-phospho-beta-D-ribosyl)imidazole-4-carboxamide. It participates in amino-acid biosynthesis; L-histidine biosynthesis; L-histidine from 5-phospho-alpha-D-ribose 1-diphosphate: step 4/9. The polypeptide is 1-(5-phosphoribosyl)-5-[(5-phosphoribosylamino)methylideneamino] imidazole-4-carboxamide isomerase (Trichodesmium erythraeum (strain IMS101)).